Here is a 329-residue protein sequence, read N- to C-terminus: MELGGAAGALGPSGPLLVCLCFGTLAAQAADTCPEVKLVGLEGSDKLSILRGCPGLPGAPGLKGETGAAGLKGERGLPGVPGKAGPAGPKGSTGAQGEKGARGEKGESGQLHSCATGPRTCTELLTRGHFLSGWHTIYLPDCRPLTVLCDMDTDGGGWTVFQRRKDGSVDFFRTWTAYKQGFGSQLGEFWLGNDNIHALTAQGTSELRVDLMDFEGNHRFAKYQSFRMADEAEKYKLVLGAFVEGNAGDSLTDHGNHFFSTKDRDNDESPSNCAAQFQGAWWYHSCHSSNLNGRYLRGPHTSYANGINWKSWGRYNYSYKVSEMKLRLT.

Residues 1-29 (MELGGAAGALGPSGPLLVCLCFGTLAAQA) form the signal peptide. The Collagen-like domain maps to 52-111 (GCPGLPGAPGLKGETGAAGLKGERGLPGVPGKAGPAGPKGSTGAQGEKGARGEKGESGQL). The segment at 64-113 (GETGAAGLKGERGLPGVPGKAGPAGPKGSTGAQGEKGARGEKGESGQLHS) is disordered. Low complexity predominate over residues 77-90 (LPGVPGKAGPAGPK). Residues 112 to 329 (HSCATGPRTC…KVSEMKLRLT (218 aa)) form the Fibrinogen C-terminal domain. Intrachain disulfides connect Cys-114-Cys-142 and Cys-121-Cys-149. Residues Asp-265, Asp-267, Ser-269, and Ser-271 each coordinate Ca(2+). Cys-273 and Cys-286 are joined by a disulfide. An N-linked (GlcNAc...) asparagine glycan is attached at Asn-316.

The protein belongs to the ficolin lectin family. In terms of assembly, homotrimer. Interacts with elastin. Interacts with MASP1 and MASP2.

The protein resides in the secreted. In terms of biological role, may function in innate immunity through activation of the lectin complement pathway. Calcium-dependent and GlcNAc-binding lectin. This Bos taurus (Bovine) protein is Ficolin-2 (FCN2).